Reading from the N-terminus, the 62-residue chain is Photosystem II reaction center protein Z (62 aa).

2 consecutive transmembrane segments (helical) span residues 8–28 (AVFA…LVFA) and 41–61 (FSGT…NSLI).

This sequence belongs to the PsbZ family. As to quaternary structure, PSII is composed of 1 copy each of membrane proteins PsbA, PsbB, PsbC, PsbD, PsbE, PsbF, PsbH, PsbI, PsbJ, PsbK, PsbL, PsbM, PsbT, PsbY, PsbZ, Psb30/Ycf12, at least 3 peripheral proteins of the oxygen-evolving complex and a large number of cofactors. It forms dimeric complexes.

It is found in the plastid. It localises to the chloroplast thylakoid membrane. May control the interaction of photosystem II (PSII) cores with the light-harvesting antenna, regulates electron flow through the 2 photosystem reaction centers. PSII is a light-driven water plastoquinone oxidoreductase, using light energy to abstract electrons from H(2)O, generating a proton gradient subsequently used for ATP formation. The sequence is that of Photosystem II reaction center protein Z from Hordeum vulgare (Barley).